Reading from the N-terminus, the 511-residue chain is Synaptotagmin-6 (511 aa).

Over 1 to 59 (MSGVWGAGGPRCQAALAVLASLCRARPPPLGLDVETCQSFELQPPEQSPSAADSGTSVS) the chain is Vesicular. The tract at residues 12–38 (CQAALAVLASLCRARPPPLGLDVETCQ) is cysteine motif. Residues 60-80 (LLAVVVIVCGVALVAVFFFLF) traverse the membrane as a helical segment. At 81–511 (WKLCWMPWRN…KSFKEGTPRL (431 aa)) the chain is on the cytoplasmic side. Residues 93–103 (ASSPSSANPAS) are compositionally biased toward low complexity. 2 disordered regions span residues 93-118 (ASSPSSANPASEILQSPSSRGNMADK) and 157-182 (TKLQRQTTEPASSTRHTSFKRHLPRQ). Over residues 160-172 (QRQTTEPASSTRH) the composition is skewed to polar residues. S217 carries the post-translational modification Phosphoserine. C2 domains lie at 230–351 (SCGK…SIWK) and 362–495 (DLGE…AHWH). The Ca(2+) site is built by D261, D267, D319, F320, D321, S324, D327, D393, D399, D453, and D455. The tract at residues 483-511 (MLAYPRKPIAHWHCLAEVKKSFKEGTPRL) is necessary for cell membrane association (isoform 2).

It belongs to the synaptotagmin family. As to quaternary structure, isoform 1: Homodimer; disulfide-linked via the cysteine motif. Isoform 1: Can also form heterodimers with SYT3, SYT7, SYT9 and SYT10. Isoform 1: Interacts with STX1A, STX1B and STX2; the interaction is Ca(2+)-dependent. Isoform 2: Is not able to form homodimer and heterodimers. Ca(2+) serves as cofactor.

The protein resides in the cytoplasmic vesicle. Its subcellular location is the secretory vesicle. It is found in the synaptic vesicle membrane. It localises to the membrane. The protein localises to the cytoplasm. The protein resides in the cytosol. Its subcellular location is the cell membrane. Its function is as follows. May be involved in Ca(2+)-dependent exocytosis of secretory vesicles through Ca(2+) and phospholipid binding to the C2 domain or may serve as Ca(2+) sensors in the process of vesicular trafficking and exocytosis. May mediate Ca(2+)-regulation of exocytosis in acrosomal reaction in sperm. The chain is Synaptotagmin-6 (Syt6) from Rattus norvegicus (Rat).